A 445-amino-acid polypeptide reads, in one-letter code: Trigger factor (445 aa).

The PPIase FKBP-type domain occupies 164–249 (GDQVTFDFEG…VKKVEEAKLP (86 aa)).

The protein belongs to the FKBP-type PPIase family. Tig subfamily.

The protein resides in the cytoplasm. It carries out the reaction [protein]-peptidylproline (omega=180) = [protein]-peptidylproline (omega=0). Its function is as follows. Involved in protein export. Acts as a chaperone by maintaining the newly synthesized protein in an open conformation. Functions as a peptidyl-prolyl cis-trans isomerase. In Psychrobacter sp. (strain PRwf-1), this protein is Trigger factor.